A 483-amino-acid polypeptide reads, in one-letter code: Protein LMBR1L (483 aa).

Topologically, residues 1–21 (MEVNQDVSVREQIFHDWVREC) are extracellular. Residues 22 to 42 (IICSLLFSTLYLLSYIVITKF) traverse the membrane as a helical segment. At 43–60 (KKHADFATVDVEDAAVNR) the chain is on the cytoplasmic side. The helical transmembrane segment at 61 to 81 (IALWMCTFTLAVSVGAVLLLP) threads the bilayer. The Extracellular portion of the chain corresponds to 82 to 112 (FSIISNEVLLSVPHNYYIQWLNGSLIHGLWN). The chain crosses the membrane as a helical span at residues 113–133 (LVFLFSNLSLVFLMPFAYLFT). Residues 134–153 (EAEGFAGSKKGVMSRVYETT) lie on the Cytoplasmic side of the membrane. Residues 154 to 174 (VVLLLLTLLVFGIVWVASAIF) form a helical membrane-spanning segment. Residues 175–194 (DDDSAGRESLYDLWEYYLPY) lie on the Extracellular side of the membrane. A helical transmembrane segment spans residues 195–215 (LYSGISLFGVLLLLLCTPFGL). At 216–294 (SRMFSVTGNL…RRRASPWQRN (79 aa)) the chain is on the cytoplasmic side. Residues 295–315 (LVYPLAMLLLLALTGITVLIV) traverse the membrane as a helical segment. The Extracellular portion of the chain corresponds to 316-342 (CVNVLELLIDEAAMPKGIQGSQLGKVS). A helical transmembrane segment spans residues 343 to 363 (FSVFGSFGAAVQVILIFYLMA). At 364–386 (SSVVGFYSSPLFIQLLPQKQNTP) the chain is on the cytoplasmic side. The chain crosses the membrane as a helical span at residues 387–407 (MTKIIGNCVSLLILSSALPVF). Residues 408–429 (SRTLGITRFDLLGDFGRFNWLG) lie on the Extracellular side of the membrane. The chain crosses the membrane as a helical span at residues 430–450 (NFYLILLYNMMFAGLATLCLV). Residues 451 to 483 (KKFTWAVQAELIRAFGLDRLPLSVKKIRSQGKA) are Cytoplasmic-facing.

This sequence belongs to the LIMR family. Dimer. Can also form higher oligomers.

It is found in the cell membrane. The protein resides in the endoplasmic reticulum membrane. Its function is as follows. May play a role in lymphocyte development by negatively regulating the canonical Wnt signaling pathway. May act as a LCN1 receptor. The protein is Protein LMBR1L (lmbr1l) of Xenopus laevis (African clawed frog).